A 335-amino-acid polypeptide reads, in one-letter code: Ferrochelatase (335 aa).

Fe cation contacts are provided by H207 and E288.

Belongs to the ferrochelatase family.

The protein resides in the cytoplasm. It carries out the reaction heme b + 2 H(+) = protoporphyrin IX + Fe(2+). It participates in porphyrin-containing compound metabolism; protoheme biosynthesis; protoheme from protoporphyrin-IX: step 1/1. In terms of biological role, catalyzes the ferrous insertion into protoporphyrin IX. The polypeptide is Ferrochelatase (Helicobacter pylori (strain G27)).